The sequence spans 141 residues: Large ribosomal subunit protein uL11 (141 aa).

Belongs to the universal ribosomal protein uL11 family. As to quaternary structure, part of the ribosomal stalk of the 50S ribosomal subunit. Interacts with L10 and the large rRNA to form the base of the stalk. L10 forms an elongated spine to which L12 dimers bind in a sequential fashion forming a multimeric L10(L12)X complex. Post-translationally, one or more lysine residues are methylated.

Its function is as follows. Forms part of the ribosomal stalk which helps the ribosome interact with GTP-bound translation factors. This Maridesulfovibrio salexigens (strain ATCC 14822 / DSM 2638 / NCIMB 8403 / VKM B-1763) (Desulfovibrio salexigens) protein is Large ribosomal subunit protein uL11.